The following is a 443-amino-acid chain: ATP-dependent protease ATPase subunit HslU (443 aa).

ATP is bound by residues I18, 60–65 (GVGKTE), D256, E321, and R393.

It belongs to the ClpX chaperone family. HslU subfamily. As to quaternary structure, a double ring-shaped homohexamer of HslV is capped on each side by a ring-shaped HslU homohexamer. The assembly of the HslU/HslV complex is dependent on binding of ATP.

It is found in the cytoplasm. In terms of biological role, ATPase subunit of a proteasome-like degradation complex; this subunit has chaperone activity. The binding of ATP and its subsequent hydrolysis by HslU are essential for unfolding of protein substrates subsequently hydrolyzed by HslV. HslU recognizes the N-terminal part of its protein substrates and unfolds these before they are guided to HslV for hydrolysis. This Buchnera aphidicola subsp. Schizaphis graminum (strain Sg) protein is ATP-dependent protease ATPase subunit HslU.